The sequence spans 85 residues: uncharacterized protein (85 aa).

The protein belongs to the ycf76 family.

It localises to the plastid. Its subcellular location is the chloroplast. This is an uncharacterized protein from Saccharum hybrid (Sugarcane).